We begin with the raw amino-acid sequence, 131 residues long: MKLGAYYKGGDLKKPSGGKKRKVRKTKKKALGGGPPQIPKLGENDTRIVERVRGGNLKVRLREAKFANVYIPKERKSVKAKIISIISTPANPDFARRNFIVKGSVIQTEVGKALVTSRPGQDGVINAVLIE.

Residues 1 to 42 (MKLGAYYKGGDLKKPSGGKKRKVRKTKKKALGGGPPQIPKLG) form a disordered region. The segment covering 16 to 30 (SGGKKRKVRKTKKKA) has biased composition (basic residues).

It belongs to the eukaryotic ribosomal protein eS8 family. In terms of assembly, part of the 30S ribosomal subunit.

In Pyrobaculum aerophilum (strain ATCC 51768 / DSM 7523 / JCM 9630 / CIP 104966 / NBRC 100827 / IM2), this protein is Small ribosomal subunit protein eS8.